The chain runs to 189 residues: Ribonuclease HII (189 aa).

Residues 1 to 189 (MIAGVDEAGR…IAALLKNNKK (189 aa)) form the RNase H type-2 domain. A divalent metal cation is bound by residues Asp-6, Glu-7, and Asp-98.

Belongs to the RNase HII family. Requires Mn(2+) as cofactor. It depends on Mg(2+) as a cofactor.

Its subcellular location is the cytoplasm. The catalysed reaction is Endonucleolytic cleavage to 5'-phosphomonoester.. In terms of biological role, endonuclease that specifically degrades the RNA of RNA-DNA hybrids. This Dichelobacter nodosus (strain VCS1703A) protein is Ribonuclease HII.